We begin with the raw amino-acid sequence, 185 residues long: Ribosome-recycling factor (185 aa).

The protein belongs to the RRF family.

It is found in the cytoplasm. Responsible for the release of ribosomes from messenger RNA at the termination of protein biosynthesis. May increase the efficiency of translation by recycling ribosomes from one round of translation to another. This Carboxydothermus hydrogenoformans (strain ATCC BAA-161 / DSM 6008 / Z-2901) protein is Ribosome-recycling factor.